The sequence spans 438 residues: Exoglucanase 3 (438 aa).

A signal peptide spans 1-20 (MFKFAALLALASLVPGFVQA). One can recognise a CBM1 domain in the interval 21 to 59 (QSPVWGQCGGNGWTGPTTCASGSTCVKQNDFYSQCLPNN). Disulfide bonds link Cys28/Cys45 and Cys39/Cys55. The segment at 57–90 (PNNQAPPSTTTQPGTTPPATTTSGGTGPTSGAGN) is disordered. The tract at residues 60-87 (QAPPSTTTQPGTTPPATTTSGGTGPTSG) is linker. Residues 61 to 79 (APPSTTTQPGTTPPATTTS) are compositionally biased toward low complexity. The catalytic stretch occupies residues 88 to 438 (AGNPYTGKTV…TLVANANPAL (351 aa)). Cystine bridges form between Cys170-Cys229 and Cys360-Cys407. Asp215 acts as the Proton donor in catalysis. Asp393 acts as the Nucleophile in catalysis.

It belongs to the glycosyl hydrolase 6 (cellulase B) family.

The enzyme catalyses Hydrolysis of (1-&gt;4)-beta-D-glucosidic linkages in cellulose and cellotetraose, releasing cellobiose from the non-reducing ends of the chains.. In terms of biological role, shows enzymatic activity towards crystalline cellulose. At long reaction times. It is also able to degrade carboxymethyl cellulose and barley B-glucan. This chain is Exoglucanase 3 (cel3), found in Agaricus bisporus (White button mushroom).